A 326-amino-acid chain; its full sequence is Biotin synthase (326 aa).

A Radical SAM core domain is found at 41-271 (YHVQLASLLS…EARVRLSAGR (231 aa)). [4Fe-4S] cluster-binding residues include Cys56, Cys60, and Cys63. Positions 102, 134, 194, and 266 each coordinate [2Fe-2S] cluster.

The protein belongs to the radical SAM superfamily. Biotin synthase family. As to quaternary structure, homodimer. [4Fe-4S] cluster is required as a cofactor. Requires [2Fe-2S] cluster as cofactor.

It catalyses the reaction (4R,5S)-dethiobiotin + (sulfur carrier)-SH + 2 reduced [2Fe-2S]-[ferredoxin] + 2 S-adenosyl-L-methionine = (sulfur carrier)-H + biotin + 2 5'-deoxyadenosine + 2 L-methionine + 2 oxidized [2Fe-2S]-[ferredoxin]. Its pathway is cofactor biosynthesis; biotin biosynthesis; biotin from 7,8-diaminononanoate: step 2/2. Its function is as follows. Catalyzes the conversion of dethiobiotin (DTB) to biotin by the insertion of a sulfur atom into dethiobiotin via a radical-based mechanism. This is Biotin synthase from Synechococcus sp. (strain RCC307).